An 84-amino-acid chain; its full sequence is Hydramacin-1 (84 aa).

An N-terminal signal peptide occupies residues 1 to 24; the sequence is MRTVVFFILVSIFLVALKPTGTQA. Pyrrolidone carboxylic acid is present on Q25. Cystine bridges form between C29/C72, C36/C65, C51/C81, and C55/C83.

In terms of tissue distribution, expressed in the endodermal epithelium.

It is found in the secreted. Its subcellular location is the target cell membrane. In terms of biological role, cationic antimicrobial peptide potently active against Gram-positive and Gram-negative bacteria including multi-resistant human pathogenic strains. Is not active against the Gram-positive Coccus species, Gram-negative non-fermentation species and against the fungus C.albicans. It leads to aggregation of bacteria as an initial step of its bactericidal mechanism. Aggregated cells are connected via electron-dense contacts and adopt a thorn apple-like morphology. Hydramycin contains a belt of positively charged residues that separate two hydrophobic areas. This structure may explain the observed aggregation of bacteria, since each of these areas can immerse into the outer leaflets of the membranes of two individual bacteria. Is able to permeabilize membranes of viable bacteria at low and neutral pH values, but no pore-forming activity is not detected. The sequence is that of Hydramacin-1 from Hydra vulgaris (Hydra).